The primary structure comprises 179 residues: Apoptosis regulator DPV022 (179 aa).

Residues 148–170 traverse the membrane as a helical segment; sequence VLITNYLKITIFGAILGITAYYI.

In terms of assembly, interacts with host BAX and BAK1.

The protein localises to the host mitochondrion. The protein resides in the host membrane. Its function is as follows. Plays a role in the inhibition of host apoptosis by sequestering and inactivating several proapoptotic BCL-2 proteins, including BAK1 and BAX. Prevents the conformational activation of both of them. This chain is Apoptosis regulator DPV022 (DPV022), found in Deerpox virus (strain Mule deer/United States/W-848-83/1983) (DPV).